The primary structure comprises 142 residues: Large ribosomal subunit protein uL13 (142 aa).

This sequence belongs to the universal ribosomal protein uL13 family. Part of the 50S ribosomal subunit.

In terms of biological role, this protein is one of the early assembly proteins of the 50S ribosomal subunit, although it is not seen to bind rRNA by itself. It is important during the early stages of 50S assembly. The protein is Large ribosomal subunit protein uL13 of Vibrio cholerae serotype O1 (strain M66-2).